Consider the following 279-residue polypeptide: Undecaprenyl-diphosphatase (279 aa).

Helical transmembrane passes span 2-22, 44-64, 85-105, 113-133, 163-183, 188-208, 225-245, and 255-275; these read LFIE…TEWL, AFME…VIVI, WQLW…AVPL, FNHM…FLWI, VLSI…AIIL, TVAA…YSGL, LLVL…VIKL, and FTVF…YSVF.

The protein belongs to the UppP family.

The protein resides in the cell membrane. It carries out the reaction di-trans,octa-cis-undecaprenyl diphosphate + H2O = di-trans,octa-cis-undecaprenyl phosphate + phosphate + H(+). Catalyzes the dephosphorylation of undecaprenyl diphosphate (UPP). Confers resistance to bacitracin. The sequence is that of Undecaprenyl-diphosphatase from Streptococcus equi subsp. zooepidemicus (strain MGCS10565).